Consider the following 502-residue polypeptide: ATP synthase subunit alpha (502 aa).

169–176 (GDRQTGKT) contributes to the ATP binding site.

Belongs to the ATPase alpha/beta chains family. In terms of assembly, F-type ATPases have 2 components, CF(1) - the catalytic core - and CF(0) - the membrane proton channel. CF(1) has five subunits: alpha(3), beta(3), gamma(1), delta(1), epsilon(1). CF(0) has three main subunits: a(1), b(2) and c(9-12). The alpha and beta chains form an alternating ring which encloses part of the gamma chain. CF(1) is attached to CF(0) by a central stalk formed by the gamma and epsilon chains, while a peripheral stalk is formed by the delta and b chains.

The protein resides in the cell membrane. It catalyses the reaction ATP + H2O + 4 H(+)(in) = ADP + phosphate + 5 H(+)(out). Produces ATP from ADP in the presence of a proton gradient across the membrane. The alpha chain is a regulatory subunit. The chain is ATP synthase subunit alpha from Desulfitobacterium hafniense (strain Y51).